The following is a 297-amino-acid chain: Large ribosomal subunit protein uL24m (297 aa).

N-acetylserine is present on Ser-2. The KOW domain occupies Phe-63–Asp-96.

This sequence belongs to the universal ribosomal protein uL24 family. Component of the mitochondrial large ribosomal subunit (mt-LSU). Mature yeast 74S mitochondrial ribosomes consist of a small (37S) and a large (54S) subunit. The 37S small subunit contains a 15S ribosomal RNA (15S mt-rRNA) and 34 different proteins. The 54S large subunit contains a 21S rRNA (21S mt-rRNA) and 46 different proteins. uL24m forms the wall of the exit tunnel.

Its subcellular location is the mitochondrion. Its function is as follows. Component of the mitochondrial ribosome (mitoribosome), a dedicated translation machinery responsible for the synthesis of mitochondrial genome-encoded proteins, including at least some of the essential transmembrane subunits of the mitochondrial respiratory chain. The mitoribosomes are attached to the mitochondrial inner membrane and translation products are cotranslationally integrated into the membrane. This chain is Large ribosomal subunit protein uL24m (MRPL40), found in Saccharomyces cerevisiae (strain ATCC 204508 / S288c) (Baker's yeast).